The chain runs to 156 residues: Deoxyuridine 5'-triphosphate nucleotidohydrolase (156 aa).

Substrate-binding positions include 76–78 (RSG), N89, 93–95 (TVD), and K103.

This sequence belongs to the dUTPase family. The cofactor is Mg(2+).

It catalyses the reaction dUTP + H2O = dUMP + diphosphate + H(+). Its pathway is pyrimidine metabolism; dUMP biosynthesis; dUMP from dCTP (dUTP route): step 2/2. This enzyme is involved in nucleotide metabolism: it produces dUMP, the immediate precursor of thymidine nucleotides and it decreases the intracellular concentration of dUTP so that uracil cannot be incorporated into DNA. The polypeptide is Deoxyuridine 5'-triphosphate nucleotidohydrolase (Rhizobium johnstonii (strain DSM 114642 / LMG 32736 / 3841) (Rhizobium leguminosarum bv. viciae)).